Here is a 320-residue protein sequence, read N- to C-terminus: Lipoyl synthase (320 aa).

[4Fe-4S] cluster-binding residues include C67, C72, C78, C93, C97, C100, and S307. One can recognise a Radical SAM core domain in the interval 79-296; that stretch reads FNHGTATFMI…RDKANEMGFE (218 aa).

The protein belongs to the radical SAM superfamily. Lipoyl synthase family. It depends on [4Fe-4S] cluster as a cofactor.

The protein localises to the cytoplasm. The catalysed reaction is [[Fe-S] cluster scaffold protein carrying a second [4Fe-4S](2+) cluster] + N(6)-octanoyl-L-lysyl-[protein] + 2 oxidized [2Fe-2S]-[ferredoxin] + 2 S-adenosyl-L-methionine + 4 H(+) = [[Fe-S] cluster scaffold protein] + N(6)-[(R)-dihydrolipoyl]-L-lysyl-[protein] + 4 Fe(3+) + 2 hydrogen sulfide + 2 5'-deoxyadenosine + 2 L-methionine + 2 reduced [2Fe-2S]-[ferredoxin]. It participates in protein modification; protein lipoylation via endogenous pathway; protein N(6)-(lipoyl)lysine from octanoyl-[acyl-carrier-protein]: step 2/2. In terms of biological role, catalyzes the radical-mediated insertion of two sulfur atoms into the C-6 and C-8 positions of the octanoyl moiety bound to the lipoyl domains of lipoate-dependent enzymes, thereby converting the octanoylated domains into lipoylated derivatives. This is Lipoyl synthase from Haemophilus influenzae (strain PittGG).